A 181-amino-acid polypeptide reads, in one-letter code: Malignant T-cell-amplified sequence 1 (181 aa).

Phosphothreonine; by MAPK1 and MAPK3 is present on threonine 81. A PUA domain is found at 92–171 (LPHQQVDKGA…IGIENIHYLN (80 aa)). Phosphoserine; by CDK1 is present on serine 118.

This sequence belongs to the MCTS1 family. As to quaternary structure, interacts (via PUA domain) with DENR; the complex regulates translation reinitiation. Post-translationally, phosphorylation is critical for stabilization and promotion of cell proliferation. In terms of tissue distribution, ubiquitous. Over-expressed in T-cell lymphoid cell lines and in non-Hodgkin lymphoma cell lines as well as in a subset of primary large B-cell lymphomas.

It localises to the cytoplasm. In terms of biological role, translation regulator forming a complex with DENR to promote translation reinitiation. Translation reinitiation is the process where the small ribosomal subunit remains attached to the mRNA following termination of translation of a regulatory upstream ORF (uORF), and resume scanning on the same mRNA molecule to initiate translation of a downstream ORF, usually the main ORF (mORF). The MCTS1/DENR complex is pivotal to two linked mechanisms essential for translation reinitiation. Firstly, the dissociation of deacylated tRNAs from post-termination 40S ribosomal complexes during ribosome recycling. Secondly, the recruitment in an EIF2-independent manner of aminoacylated initiator tRNA to P site of 40S ribosomes for a new round of translation. This regulatory mechanism governs the translation of more than 150 genes which translation reinitiation is MCTS1/DENR complex-dependent. Consequently, modulates various unrelated biological processes including cell cycle regulation and DNA damage signaling and repair. Notably, it positively regulates interferon gamma immunity to mycobacteria by enhancing the translation of JAK2. This is Malignant T-cell-amplified sequence 1 (MCTS1) from Homo sapiens (Human).